The sequence spans 210 residues: MKKGVFIVIEGVDGSGKSSFLKRMMNEHTMINSQPIIYSREPGGCDTSEAVRELIMKLSNSDPLTEALLFCASRNEHLKKKILPALNENKIAICDRFVVSSWIYQGLIKNAGYEKVKKINEYVTDGLEPDLTILFDVDPEIAAKRISERSTMNHLDAYTKERINKIRNAYLERLKDNKKAKIINASLDLDTVYDQVVNIITLFVKNHELN.

Glycine 11 to serine 18 contacts ATP.

The protein belongs to the thymidylate kinase family.

It carries out the reaction dTMP + ATP = dTDP + ADP. In terms of biological role, phosphorylation of dTMP to form dTDP in both de novo and salvage pathways of dTTP synthesis. This chain is Thymidylate kinase, found in Mycoplasmoides gallisepticum (strain R(low / passage 15 / clone 2)) (Mycoplasma gallisepticum).